A 120-amino-acid polypeptide reads, in one-letter code: Flagellar protein FliT (120 aa).

Residues 1–50 form a required for homodimerization region; that stretch reads MERHQHLLSEYQQILTLSEQMLMLATVENWDALVDLEMAYLKAVENTANI. The tract at residues 60–98 is fliD binding; it reads LQELLRQKLRSILENEIEIKRLLQRRLDKLSELVGQSTR.

The protein belongs to the FliT family. In terms of assembly, homodimer. Interacts with FliD and FlhC.

The protein resides in the cytoplasm. Its subcellular location is the cytosol. Dual-function protein that regulates the transcription of class 2 flagellar operons and that also acts as an export chaperone for the filament-capping protein FliD. As a transcriptional regulator, acts as an anti-FlhDC factor; it directly binds FlhC, thus inhibiting the binding of the FlhC/FlhD complex to class 2 promoters, resulting in decreased expression of class 2 flagellar operons. As a chaperone, effects FliD transition to the membrane by preventing its premature polymerization, and by directing it to the export apparatus. In Yersinia pseudotuberculosis serotype IB (strain PB1/+), this protein is Flagellar protein FliT.